The sequence spans 195 residues: ATP-dependent Clp protease proteolytic subunit (195 aa).

Residue Ser-97 is the Nucleophile of the active site. His-122 is an active-site residue.

Belongs to the peptidase S14 family. In terms of assembly, fourteen ClpP subunits assemble into 2 heptameric rings which stack back to back to give a disk-like structure with a central cavity, resembling the structure of eukaryotic proteasomes.

It is found in the cytoplasm. It catalyses the reaction Hydrolysis of proteins to small peptides in the presence of ATP and magnesium. alpha-casein is the usual test substrate. In the absence of ATP, only oligopeptides shorter than five residues are hydrolyzed (such as succinyl-Leu-Tyr-|-NHMec, and Leu-Tyr-Leu-|-Tyr-Trp, in which cleavage of the -Tyr-|-Leu- and -Tyr-|-Trp bonds also occurs).. Functionally, cleaves peptides in various proteins in a process that requires ATP hydrolysis. Has a chymotrypsin-like activity. Plays a major role in the degradation of misfolded proteins. The sequence is that of ATP-dependent Clp protease proteolytic subunit from Lactobacillus gasseri (strain ATCC 33323 / DSM 20243 / BCRC 14619 / CIP 102991 / JCM 1131 / KCTC 3163 / NCIMB 11718 / NCTC 13722 / AM63).